A 309-amino-acid chain; its full sequence is Aspartate carbamoyltransferase catalytic subunit (309 aa).

The carbamoyl phosphate site is built by arginine 58 and threonine 59. Lysine 87 provides a ligand contact to L-aspartate. Arginine 108, histidine 136, and glutamine 139 together coordinate carbamoyl phosphate. L-aspartate-binding residues include arginine 168 and arginine 229. Residues leucine 268 and proline 269 each contribute to the carbamoyl phosphate site.

This sequence belongs to the aspartate/ornithine carbamoyltransferase superfamily. ATCase family. Heterooligomer of catalytic and regulatory chains.

It catalyses the reaction carbamoyl phosphate + L-aspartate = N-carbamoyl-L-aspartate + phosphate + H(+). Its pathway is pyrimidine metabolism; UMP biosynthesis via de novo pathway; (S)-dihydroorotate from bicarbonate: step 2/3. Its function is as follows. Catalyzes the condensation of carbamoyl phosphate and aspartate to form carbamoyl aspartate and inorganic phosphate, the committed step in the de novo pyrimidine nucleotide biosynthesis pathway. The polypeptide is Aspartate carbamoyltransferase catalytic subunit (Methanosarcina mazei (strain ATCC BAA-159 / DSM 3647 / Goe1 / Go1 / JCM 11833 / OCM 88) (Methanosarcina frisia)).